Here is a 486-residue protein sequence, read N- to C-terminus: Putative ankyrin repeat protein R634 (486 aa).

ANK repeat units follow at residues 84-113, 114-143, 145-173, 174-203, 205-233, 234-263, 265-293, 307-336, 337-366, 367-396, 398-426, and 427-456; these read DLFKYVIEFCISGKLDSIKRLVSMGANVRE, HNDVALNRAVENGHMDIFEYLISKGADLYA, KNTLVRCASYGGNLDMVKYLISIGANFRE, NCDTPLIWACHNGHLEIVKYLVDQGADVNS, SHKSIITASKMGHLGIVKYLVSKTTNIDW, RHNYAAAFAAQNNHLEIVKYLVNEGANLEI, DGCIIRVAAKNGHLDIVKYLVSLGMEIGF, NKITPVIGSAVEGGHLSMVKYFVSIGATIK, EKNYAFVKAAEYGHLEIIKYLVSQGISLEK, KINKALIVACSKGHLEIVKYLVENGANVKT, EGLPLRQACWGNYLDIAKYLVSNGADVTS, and YDNYALKTALEKGDLETVKYFIYVGANVND.

The protein is Putative ankyrin repeat protein R634 of Acanthamoeba polyphaga (Amoeba).